Here is a 216-residue protein sequence, read N- to C-terminus: ATP phosphoribosyltransferase (216 aa).

The protein belongs to the ATP phosphoribosyltransferase family. Short subfamily. As to quaternary structure, heteromultimer composed of HisG and HisZ subunits.

It is found in the cytoplasm. It catalyses the reaction 1-(5-phospho-beta-D-ribosyl)-ATP + diphosphate = 5-phospho-alpha-D-ribose 1-diphosphate + ATP. It participates in amino-acid biosynthesis; L-histidine biosynthesis; L-histidine from 5-phospho-alpha-D-ribose 1-diphosphate: step 1/9. In terms of biological role, catalyzes the condensation of ATP and 5-phosphoribose 1-diphosphate to form N'-(5'-phosphoribosyl)-ATP (PR-ATP). Has a crucial role in the pathway because the rate of histidine biosynthesis seems to be controlled primarily by regulation of HisG enzymatic activity. This chain is ATP phosphoribosyltransferase, found in Prochlorococcus marinus (strain MIT 9211).